We begin with the raw amino-acid sequence, 45 residues long: Large ribosomal subunit protein bL36 (45 aa).

Residues 1-20 (MKVSSSIKADPSKGDKLVRR) are disordered.

This sequence belongs to the bacterial ribosomal protein bL36 family.

The sequence is that of Large ribosomal subunit protein bL36 from Chlamydia abortus (strain DSM 27085 / S26/3) (Chlamydophila abortus).